The chain runs to 282 residues: Bis(5'-nucleosyl)-tetraphosphatase, symmetrical (282 aa).

This sequence belongs to the Ap4A hydrolase family.

The catalysed reaction is P(1),P(4)-bis(5'-adenosyl) tetraphosphate + H2O = 2 ADP + 2 H(+). Its function is as follows. Hydrolyzes diadenosine 5',5'''-P1,P4-tetraphosphate to yield ADP. The polypeptide is Bis(5'-nucleosyl)-tetraphosphatase, symmetrical (Shigella dysenteriae serotype 1 (strain Sd197)).